The sequence spans 126 residues: Defensin-like protein 183 (126 aa).

An N-terminal signal peptide occupies residues 1-26; the sequence is MEKALSLVVFIIFSIMLASVENKVNA. 8 cysteine pairs are disulfide-bonded: Cys29-Cys68, Cys36-Cys55, Cys39-Cys62, Cys43-Cys64, Cys80-Cys126, Cys91-Cys111, Cys96-Cys120, and Cys100-Cys122.

Belongs to the DEFL family.

It is found in the secreted. This is Defensin-like protein 183 (LCR19) from Arabidopsis thaliana (Mouse-ear cress).